A 226-amino-acid polypeptide reads, in one-letter code: Phosphoribosylformylglycinamidine synthase subunit PurQ (226 aa).

Residues 2 to 226 enclose the Glutamine amidotransferase type-1 domain; that stretch reads KIAVVVFPGS…LENGRIKVEA (225 aa). Catalysis depends on cysteine 86, which acts as the Nucleophile. Catalysis depends on residues histidine 195 and glutamate 197.

In terms of assembly, part of the FGAM synthase complex composed of 1 PurL, 1 PurQ and 2 PurS subunits.

It is found in the cytoplasm. The enzyme catalyses N(2)-formyl-N(1)-(5-phospho-beta-D-ribosyl)glycinamide + L-glutamine + ATP + H2O = 2-formamido-N(1)-(5-O-phospho-beta-D-ribosyl)acetamidine + L-glutamate + ADP + phosphate + H(+). The catalysed reaction is L-glutamine + H2O = L-glutamate + NH4(+). Its pathway is purine metabolism; IMP biosynthesis via de novo pathway; 5-amino-1-(5-phospho-D-ribosyl)imidazole from N(2)-formyl-N(1)-(5-phospho-D-ribosyl)glycinamide: step 1/2. Functionally, part of the phosphoribosylformylglycinamidine synthase complex involved in the purines biosynthetic pathway. Catalyzes the ATP-dependent conversion of formylglycinamide ribonucleotide (FGAR) and glutamine to yield formylglycinamidine ribonucleotide (FGAM) and glutamate. The FGAM synthase complex is composed of three subunits. PurQ produces an ammonia molecule by converting glutamine to glutamate. PurL transfers the ammonia molecule to FGAR to form FGAM in an ATP-dependent manner. PurS interacts with PurQ and PurL and is thought to assist in the transfer of the ammonia molecule from PurQ to PurL. The chain is Phosphoribosylformylglycinamidine synthase subunit PurQ from Limosilactobacillus reuteri (strain DSM 20016) (Lactobacillus reuteri).